Reading from the N-terminus, the 185-residue chain is Ribosome-recycling factor (185 aa).

This sequence belongs to the RRF family.

The protein localises to the cytoplasm. Functionally, responsible for the release of ribosomes from messenger RNA at the termination of protein biosynthesis. May increase the efficiency of translation by recycling ribosomes from one round of translation to another. In Bacillus cereus (strain G9842), this protein is Ribosome-recycling factor.